We begin with the raw amino-acid sequence, 324 residues long: HTH-type transcriptional regulator CysB (324 aa).

Residues 1–59 (MKLQQLRYIVEVVNHNLNVSSTAEGLYTSQPGISKQVRMLEDELGIQIFSRSGKHLTQV) form the HTH lysR-type domain. Residues 19-38 (VSSTAEGLYTSQPGISKQVR) constitute a DNA-binding region (H-T-H motif).

It belongs to the LysR transcriptional regulatory family. In terms of assembly, homotetramer.

Its subcellular location is the cytoplasm. In terms of biological role, this protein is a positive regulator of gene expression for the cysteine regulon. The inducer for CysB is N-acetylserine. This is HTH-type transcriptional regulator CysB (cysB) from Escherichia coli O157:H7.